The sequence spans 322 residues: HPr kinase/phosphorylase (322 aa).

Active-site residues include histidine 146 and lysine 167. Residue 161 to 168 coordinates ATP; it reads GDSGLGKS. Serine 168 provides a ligand contact to Mg(2+). Catalysis depends on aspartate 185, which acts as the Proton acceptor; for phosphorylation activity. Proton donor; for dephosphorylation activity. Residues 209-218 are important for the catalytic mechanism of both phosphorylation and dephosphorylation; that stretch reads LEVRGLGLLD. Position 210 (glutamate 210) interacts with Mg(2+). Arginine 250 is a catalytic residue. Residues 271-276 are important for the catalytic mechanism of dephosphorylation; sequence QVAAGR.

The protein belongs to the HPrK/P family. As to quaternary structure, homohexamer. Mg(2+) serves as cofactor.

It carries out the reaction [HPr protein]-L-serine + ATP = [HPr protein]-O-phospho-L-serine + ADP + H(+). The catalysed reaction is [HPr protein]-O-phospho-L-serine + phosphate + H(+) = [HPr protein]-L-serine + diphosphate. In terms of biological role, catalyzes the ATP- as well as the pyrophosphate-dependent phosphorylation of a specific serine residue in HPr, a phosphocarrier protein of the phosphoenolpyruvate-dependent sugar phosphotransferase system (PTS). HprK/P also catalyzes the pyrophosphate-producing, inorganic phosphate-dependent dephosphorylation (phosphorolysis) of seryl-phosphorylated HPr (P-Ser-HPr). In Paraburkholderia xenovorans (strain LB400), this protein is HPr kinase/phosphorylase.